The primary structure comprises 586 residues: MSAILSADDLNDFISPGVACIKPIETLPTQPGPEQSQQPQSLEFEVILDGQQPTTGSSSNGTTPPAQISLTDCLACSGCVTSAEAVLVSLQSHNEVLTLLDAAPALRVIQDSDGKPVVSGLENPEAKLFVASVSPQTRASLAAACGGAVTEQQAGWMIEQLLMGPAGLAGGGKHGNGFTWVVDTNTAREACLMLGSDEVLGGGSWGGSDKPTSPILTSSCPGWVCYAEKTHPYVLPHLSRVKSPQALMGTLLKTTLSRVLGIAPDRVWHLAVMPCFDKKLEASREELTDTAWGSGGVPGRGVRDVDCVITSKEILMLAASKGVDFFGLAKSAPVKQPMFPDSDIHRFLFPAQRRKQLRDGGTSGGNLHYIIQDVLSKHAGSQIQMTRGRNADVVEFAVLSSSGETIFKAARYYGFRNIQNLVRKLKPAKASRMPGGKPFGSARRPAGKSATLEHSYVEVMACPGGCTNGGGQIKVDDQVVIDRKNFGEKPGPDEQKAWQAEVDEAYFSGDESDPAQGAGDDQSMELIAGISPSYIRDTLAHWADITGIQLDKLVYTSYREVVSDVGKPISDTERVVQLAGKIGGGW.

[4Fe-4S] cluster-binding residues include cysteine 20, cysteine 73, cysteine 76, cysteine 79, cysteine 220, cysteine 275, cysteine 462, and cysteine 466.

It belongs to the NARF family.

In terms of biological role, component of the cytosolic Fe/S protein assembly machinery. Required for maturation of extramitochondrial Fe/S proteins. May play a role in the transfer of pre-assembled Fe/S clusters to target apoproteins. This chain is Cytosolic Fe-S cluster assembly factor NAR1 (NAR1), found in Chaetomium globosum (strain ATCC 6205 / CBS 148.51 / DSM 1962 / NBRC 6347 / NRRL 1970) (Soil fungus).